The chain runs to 199 residues: DNA repair RAD52-like protein 2, chloroplastic (199 aa).

The transit peptide at 1 to 40 (MALQVQQTSAAFTISSPSTAAARIKLSPFRTVAVNRGVRC) directs the protein to the chloroplast. Position 41 is an N-acetylserine (Ser41).

Belongs to the RAD52 family. In terms of tissue distribution, expressed in roots and shoots. Expressed at low levels in cauline leaves, flower buds, flowers and siliques.

It is found in the plastid. Its subcellular location is the chloroplast. Its function is as follows. Involved in double-stranded DNA break repair. The chain is DNA repair RAD52-like protein 2, chloroplastic from Arabidopsis thaliana (Mouse-ear cress).